The sequence spans 423 residues: Zinc finger protein Gfi-1 (423 aa).

The SNAG domain stretch occupies residues methionine 1–serine 20. The segment at methionine 1–cysteine 76 is disordered. A phosphoserine mark is found at serine 20 and serine 57. Residues serine 48–serine 57 are compositionally biased toward basic and acidic residues. Residues arginine 141–cysteine 258 form a required for interaction with RELA region. 6 consecutive C2H2-type zinc fingers follow at residues tyrosine 256 to histidine 279, phenylalanine 285 to histidine 307, phenylalanine 313 to histidine 335, tyrosine 341 to histidine 363, histidine 369 to histidine 391, and phenylalanine 397 to histidine 420.

Interacts (via the zinc-finger domain) with ARIH2; the interaction prevents GFI1 ubiquitination and proteasomal degradation. Forms a complex with EHMT2 and HDAC1 to promote 'Lys-9' dimethylation of H3 (H3K9Me2) and repress expression of target genes. Interacts directly with EHMT2. Interacts with RUNX1T1; the interaction represses HDAC-mediated transcriptional activity. Interacts (via the C-terminal zinc fingers) with ZBTB17; the interaction results in the recruitment of GFI1 to the CDKN1A/p21 and CDKNIB promoters and repression of transcription. Interacts with U2AF1L4. Component of RCOR-GFI-KDM1A-HDAC complexes. Interacts directly with RCOR1, KDM1A and HDAC2. Also interacts with HDAC1. Component of the GFI1-AJUBA-HDAC1 repressor complex. Interacts directly with AJUBA (via its LIM domains); the interaction results in the HDAC-dependent corepression of a subset of GFI1 target genes and, occurs independently of the SNAG domain. Interacts with SPI1; the interaction inhibits SPI1 transcriptional activity targeted at macrophage-specific genes, repressing macrophage differentiation of myeloid progenitor cells and promoting granulocyte commitment. Interacts with PIAS3; the interaction relieves the inhibitory effect of PIAS3 on STAT3-mediated transcriptional activity. Interacts with RELA; the interaction occurs on liposaccharide (LPS) stimulation and controls RELA DNA binding activity and regulates endotoxin-mediated TOLL-like receptor inflammatory response. In terms of processing, ubiquitinated.

Its subcellular location is the nucleus. In terms of biological role, transcription repressor essential for hematopoiesis. Functions in a cell-context and development-specific manner. Binds to 5'-TAAATCAC[AT]GCA-3' in the promoter region of a large number of genes. Component of several complexes, including the EHMT2-GFI1-HDAC1, AJUBA-GFI1-HDAC1 and RCOR-GFI-KDM1A-HDAC complexes, that suppress, via histone deacetylase (HDAC) recruitment, a number of genes implicated in multilineage blood cell development. Regulates neutrophil differentiation, promotes proliferation of lymphoid cells, and is required for granulocyte development. Inhibits SPI1 transcriptional activity at macrophage-specific genes, repressing macrophage differentiation of myeloid progenitor cells and promoting granulocyte commitment. Mediates, together with U2AF1L4, the alternative splicing of CD45 and controls T-cell receptor signaling. Regulates the endotoxin-mediated Toll-like receptor (TLR) inflammatory response by antagonizing RELA. Cooperates with CBFA2T2 to regulate ITGB1-dependent neurite growth. Controls cell-cycle progression by repressing CDKNIA/p21 transcription in response to TGFB1 via recruitment of GFI1 by ZBTB17 to the CDKNIA/p21 and CDKNIB promoters. Required for the maintenance of inner ear hair cells. In addition to its role in transcription, acts as a substrate adapter for PRMT1 in the DNA damage response. Facilitates the recognition of TP53BP1 and MRE11 substrates by PRMT1, promoting their methylation and the DNA damage response. The protein is Zinc finger protein Gfi-1 (Gfi1) of Mus musculus (Mouse).